We begin with the raw amino-acid sequence, 373 residues long: L-threonine 3-dehydrogenase, mitochondrial (373 aa).

Residues 62–67 (GGLGQL), 88–90 (DIR), 106–107 (DI), tyrosine 195, lysine 199, and isoleucine 225 each bind NAD(+). Tyrosine 195 serves as the catalytic Proton donor/acceptor.

Belongs to the NAD(P)-dependent epimerase/dehydratase family. In terms of assembly, homodimer.

It localises to the mitochondrion. It catalyses the reaction L-threonine + NAD(+) = (2S)-2-amino-3-oxobutanoate + NADH + H(+). It participates in amino-acid degradation; L-threonine degradation via oxydo-reductase pathway; glycine from L-threonine: step 1/2. In terms of biological role, catalyzes the NAD(+)-dependent oxidation of L-threonine to 2-amino-3-ketobutyrate, mediating L-threonine catabolism. This is L-threonine 3-dehydrogenase, mitochondrial from Sus scrofa (Pig).